We begin with the raw amino-acid sequence, 802 residues long: Sucrose synthase 1 (802 aa).

Residues 272-749 (MMFNVVILSP…GLQRIYEKYT (478 aa)) form a GT-B glycosyltransferase region.

The protein belongs to the glycosyltransferase 1 family. Plant sucrose synthase subfamily.

It carries out the reaction an NDP-alpha-D-glucose + D-fructose = a ribonucleoside 5'-diphosphate + sucrose + H(+). Sucrose-cleaving enzyme that provides UDP-glucose and fructose for various metabolic pathways. Most active in the sink tissues where it is responsible for the breakdown of the arriving sucrose. This Zea mays (Maize) protein is Sucrose synthase 1 (SH-1).